A 290-amino-acid polypeptide reads, in one-letter code: Zinc finger matrin-type protein 3 (290 aa).

Matrin-type zinc fingers lie at residues 70–100 (LFCKLCNVTLNSAQQAQAHYQGKNHGKKLRN) and 148–178 (DYCKLCDASFSSPAVAQAHYQGKNHAKRLRL). Disordered regions lie at residues 182-203 (QSHSFSDSAEAGQRRTRKEGSE) and 266-290 (ESKQHKSKVSEQRYRSEMENLGYVQ). The Matrin-type 3 zinc-finger motif lies at 246–276 (FYCSMCNVGAGEEVEFRQHLESKQHKSKVSE). A compositionally biased stretch (basic and acidic residues) spans 266–283 (ESKQHKSKVSEQRYRSEM).

As to quaternary structure, interacts with dsRNA. As to expression, constitutively expressed in brain and testis. Also expressed in lung, kidney and spleen after whole body gamma irradiation.

Its subcellular location is the nucleus. The protein localises to the nucleolus. In terms of biological role, acts as a bona fide target gene of p53/TP53. May play a role in the TP53-dependent growth regulatory pathway. May contribute to TP53-mediated apoptosis by regulation of TP53 expression and translocation to the nucleus and nucleolus. This chain is Zinc finger matrin-type protein 3, found in Mus musculus (Mouse).